The sequence spans 92 residues: DNA-binding protein HU-alpha (92 aa).

Belongs to the bacterial histone-like protein family. In terms of assembly, heterodimer of an alpha and a beta chain.

In terms of biological role, histone-like DNA-binding protein which is capable of wrapping DNA to stabilize it, and thus to prevent its denaturation under extreme environmental conditions. This chain is DNA-binding protein HU-alpha (hupA), found in Burkholderia pseudomallei (strain K96243).